The following is a 266-amino-acid chain: Beta-lactamase OXA-11 (266 aa).

An N-terminal signal peptide occupies residues 1–20 (MKTFAAYVIIACLSSTALAG). Catalysis depends on S67, which acts as the Acyl-ester intermediate. K70 is modified (N6-carboxylysine). 205-207 (KTG) provides a ligand contact to substrate.

This sequence belongs to the class-D beta-lactamase family.

The catalysed reaction is a beta-lactam + H2O = a substituted beta-amino acid. Hydrolyzes carbenicillin, oxacillin and cephalosporin. Does not hydrolyze cefoxitin or carbapenems. The protein is Beta-lactamase OXA-11 (bla) of Pseudomonas aeruginosa.